A 389-amino-acid polypeptide reads, in one-letter code: Phospho-N-acetylmuramoyl-pentapeptide-transferase (389 aa).

11 helical membrane-spanning segments follow: residues 25-45 (RAVMANVTALVIGLGFGPWVI), 74-94 (MGGVLVLISIAISTLLWCDWG), 97-117 (FIWVVLLVTLGYGAIGWVDDY), 134-154 (FFWQTLIGLVAAVYLAFSVSE), 167-187 (WIEGGMFADVPYKMNLIVPFF), 190-210 (VSYPLGVTGFIVLTYLVIVGS), 222-242 (GLVIMPVVLVGGGLGVFAYVM), 259-279 (AGELLIFCSAMAGAGLAFLWF), 286-306 (VFMGDVGALALGGALGTVAVI), 311-331 (IVLFVMGGIFVVETLSVMLQV), and 366-386 (QVTVRFWIITMLLVLIGLSSL).

It belongs to the glycosyltransferase 4 family. MraY subfamily. It depends on Mg(2+) as a cofactor.

The protein localises to the cell inner membrane. The enzyme catalyses UDP-N-acetyl-alpha-D-muramoyl-L-alanyl-gamma-D-glutamyl-meso-2,6-diaminopimeloyl-D-alanyl-D-alanine + di-trans,octa-cis-undecaprenyl phosphate = di-trans,octa-cis-undecaprenyl diphospho-N-acetyl-alpha-D-muramoyl-L-alanyl-D-glutamyl-meso-2,6-diaminopimeloyl-D-alanyl-D-alanine + UMP. It participates in cell wall biogenesis; peptidoglycan biosynthesis. Functionally, catalyzes the initial step of the lipid cycle reactions in the biosynthesis of the cell wall peptidoglycan: transfers peptidoglycan precursor phospho-MurNAc-pentapeptide from UDP-MurNAc-pentapeptide onto the lipid carrier undecaprenyl phosphate, yielding undecaprenyl-pyrophosphoryl-MurNAc-pentapeptide, known as lipid I. The protein is Phospho-N-acetylmuramoyl-pentapeptide-transferase of Cupriavidus metallidurans (strain ATCC 43123 / DSM 2839 / NBRC 102507 / CH34) (Ralstonia metallidurans).